The primary structure comprises 27 residues: Delta-conotoxin TsVIA (27 aa).

3 cysteine pairs are disulfide-bonded: Cys1–Cys17, Cys8–Cys21, and Cys16–Cys25.

The protein belongs to the conotoxin O1 superfamily. As to expression, expressed by the venom duct.

It is found in the secreted. In terms of biological role, delta-conotoxins bind to site 6 of voltage-gated sodium channels (Nav) and inhibit the inactivation process. This toxin inhibits tetrodotoxin(TTX)-sensitive sodium channels. A test on mouse Nav1.6/SCN8A confirms this sensitivity. This chain is Delta-conotoxin TsVIA, found in Conus tessulatus (Tessellate cone).